The chain runs to 493 residues: Lysine--tRNA ligase (493 aa).

Positions 406 and 413 each coordinate Mg(2+).

The protein belongs to the class-II aminoacyl-tRNA synthetase family. In terms of assembly, homodimer. Mg(2+) serves as cofactor.

It localises to the cytoplasm. It carries out the reaction tRNA(Lys) + L-lysine + ATP = L-lysyl-tRNA(Lys) + AMP + diphosphate. The polypeptide is Lysine--tRNA ligase (Leuconostoc citreum (strain KM20)).